The sequence spans 207 residues: GTP cyclohydrolase-2 (207 aa).

GTP is bound at residue 49–53 (RTHSE). 3 residues coordinate Zn(2+): Cys-54, Cys-65, and Cys-67. Residues Gln-70, 92–94 (EGR), and Thr-114 each bind GTP. The active-site Proton acceptor is the Asp-126. The active-site Nucleophile is Arg-128. GTP-binding residues include Thr-149 and Lys-154.

Belongs to the GTP cyclohydrolase II family. Zn(2+) is required as a cofactor.

The enzyme catalyses GTP + 4 H2O = 2,5-diamino-6-hydroxy-4-(5-phosphoribosylamino)-pyrimidine + formate + 2 phosphate + 3 H(+). Its pathway is cofactor biosynthesis; riboflavin biosynthesis; 5-amino-6-(D-ribitylamino)uracil from GTP: step 1/4. Functionally, catalyzes the conversion of GTP to 2,5-diamino-6-ribosylamino-4(3H)-pyrimidinone 5'-phosphate (DARP), formate and pyrophosphate. In Hahella chejuensis (strain KCTC 2396), this protein is GTP cyclohydrolase-2.